Consider the following 20-residue polypeptide: Alkaline phosphatase (20 aa).

As to expression, expressed by the venom gland.

The protein resides in the secreted. It catalyses the reaction a phosphate monoester + H2O = an alcohol + phosphate. Functionally, has hemorrhagic activity. The protein is Alkaline phosphatase of Deinagkistrodon acutus (Hundred-pace snake).